A 128-amino-acid chain; its full sequence is Large ribosomal subunit protein bL12 (128 aa).

This sequence belongs to the bacterial ribosomal protein bL12 family. In terms of assembly, homodimer. Part of the ribosomal stalk of the 50S ribosomal subunit. Forms a multimeric L10(L12)X complex, where L10 forms an elongated spine to which 2 to 4 L12 dimers bind in a sequential fashion. Binds GTP-bound translation factors.

Forms part of the ribosomal stalk which helps the ribosome interact with GTP-bound translation factors. Is thus essential for accurate translation. The chain is Large ribosomal subunit protein bL12 from Kosmotoga olearia (strain ATCC BAA-1733 / DSM 21960 / TBF 19.5.1).